The sequence spans 544 residues: MTPGEIKRLYFIIRVFLSYGLDELIPKVKLTLPLRIGRFGFFWIKNQHKGKELGERLRLALQELGPVWIKFGQMLSTRRDLFPLAIADQLSLLQDKVASFDGKLARRYIEESLGGPLEQWFDDFDEKALASASIAQVHTAKLKENGKEVVLKVIRPDILPVIKADVKLMYRIANWVPLLPDGRRLRPKEVVREYEKTLIDELNLLRESANAIQLRRNFENSSMLYVPEVYADYCRENVMVMERIYGIPVSDIAALKAQGTNMKILAERGVKVFFTQVFRDSFFHADMHPGNIFVSYEHPEDPLYIGIDCGIVGSLNKEDKRYLAENFIAFFNRDYRKVAELHVDSGWVPADTNVEDFEFAIRTVCEPIFEKPLAEISFGHVLLNLFNTARRFNMEVQPQLVLLQKTLLYIEGLGRQLYPQLDLWKTAKPFLEDWVHSQVGIPAITQALKEKAPYWAEKMPEIPDLIYGALRQHKFLQSNIEQLSEQLKQQRNKQRKSQYLLGIGATLILCGSLFFISASNRMAIAFMSAGALSWIIGWYKSGKS.

The 378-residue stretch at 123–500 (DFDEKALASA…RNKQRKSQYL (378 aa)) folds into the Protein kinase domain. Residues 129-137 (LASASIAQV) and Lys152 contribute to the ATP site. The Proton acceptor role is filled by Asp286. Helical transmembrane passes span 499 to 519 (YLLG…ISAS) and 522 to 542 (MAIA…YKSG).

Belongs to the ABC1 family. UbiB subfamily.

It localises to the cell inner membrane. Its pathway is cofactor biosynthesis; ubiquinone biosynthesis [regulation]. In terms of biological role, is probably a protein kinase regulator of UbiI activity which is involved in aerobic coenzyme Q (ubiquinone) biosynthesis. Required for the expression of 2'-N-acetyltransferase. The chain is Probable protein kinase UbiB from Providencia stuartii.